Consider the following 202-residue polypeptide: Glycerol-3-phosphate acyltransferase (202 aa).

The next 5 helical transmembrane spans lie at Leu-6–Val-26, Ser-56–Phe-76, Ser-82–Phe-102, Ala-118–Ile-138, and Tyr-141–Asp-161.

The protein belongs to the PlsY family. In terms of assembly, probably interacts with PlsX.

Its subcellular location is the cell inner membrane. The enzyme catalyses an acyl phosphate + sn-glycerol 3-phosphate = a 1-acyl-sn-glycero-3-phosphate + phosphate. Its pathway is lipid metabolism; phospholipid metabolism. Catalyzes the transfer of an acyl group from acyl-phosphate (acyl-PO(4)) to glycerol-3-phosphate (G3P) to form lysophosphatidic acid (LPA). This enzyme utilizes acyl-phosphate as fatty acyl donor, but not acyl-CoA or acyl-ACP. The chain is Glycerol-3-phosphate acyltransferase from Shewanella woodyi (strain ATCC 51908 / MS32).